The sequence spans 199 residues: Ribonuclease HII (199 aa).

An RNase H type-2 domain is found at 10–199 (RIEAGCDEAG…LLPEQLTLGF (190 aa)). A divalent metal cation-binding residues include Asp16, Glu17, and Asp108.

It belongs to the RNase HII family. Mn(2+) serves as cofactor. It depends on Mg(2+) as a cofactor.

It localises to the cytoplasm. The catalysed reaction is Endonucleolytic cleavage to 5'-phosphomonoester.. Its function is as follows. Endonuclease that specifically degrades the RNA of RNA-DNA hybrids. This Parabacteroides distasonis (strain ATCC 8503 / DSM 20701 / CIP 104284 / JCM 5825 / NCTC 11152) protein is Ribonuclease HII.